The chain runs to 1031 residues: Protein draper (1031 aa).

Positions 1 to 16 are cleaved as a signal peptide; the sequence is MLPVILIACLAQLVLA. Over 17-800 the chain is Extracellular; that stretch reads QADLKDLDGP…DQSENSSRAS (784 aa). Residues 25-100 enclose the EMI domain; the sequence is GPNICKRREL…YIASAGECVP (76 aa). Intrachain disulfides connect Cys29–Cys88, Cys55–Cys62, Cys87–Cys98, Cys102–Cys111, Cys106–Cys117, and Cys119–Cys128. A glycan (N-linked (GlcNAc...) asparagine) is linked at Asn73. 6 EGF-like domains span residues 99–129, 137–172, 180–215, 223–258, 266–301, and 309–344; these read VPHCSEPCQHGRCISPEKCKCDHGYGGPACD, YGRNCSMQCDCLNNAVCEPFSGDCECAKGYTGARCA, FGANCSEKCRCENGGKCHHVSGECQCAPGFTGPLCD, HGAQCQQDCPCQNDGKCQPETGACMCNPGWTGDVCA, YGPGCQESCECYKGAPCHHITGQCECPPGYRGERCF, and YGFNCSMTCDCANDAMCDRANGTCICNPGWTGAKCA. Asn140 carries an N-linked (GlcNAc...) asparagine glycan. Disulfide bonds link Cys141-Cys153, Cys147-Cys160, and Cys162-Cys171. Asn183 carries an N-linked (GlcNAc...) asparagine glycan. 9 disulfides stabilise this stretch: Cys184/Cys196, Cys190/Cys203, Cys205/Cys214, Cys227/Cys239, Cys233/Cys246, Cys248/Cys257, Cys270/Cys282, Cys276/Cys289, and Cys291/Cys300. Residue Asn312 is glycosylated (N-linked (GlcNAc...) asparagine). Intrachain disulfides connect Cys313–Cys325, Cys319–Cys332, and Cys334–Cys343. Residue Asn329 is glycosylated (N-linked (GlcNAc...) asparagine). An N-linked (GlcNAc...) asparagine glycan is attached at Asn358. EGF-like domains are found at residues 398 to 433 and 484 to 519; these read YGPNCELTCNCKNGAKCSPVNGTCLCAPGWRGPTCE and FGQDCAKVCDCHNNAACNPQNGSCTCAAGWTGERCE. 6 disulfides stabilise this stretch: Cys402–Cys414, Cys408–Cys421, Cys423–Cys432, Cys488–Cys500, Cys494–Cys507, and Cys509–Cys518. N-linked (GlcNAc...) asparagine glycosylation is present at Asn418. N-linked (GlcNAc...) asparagine glycosylation is present at Asn504. N-linked (GlcNAc...) asparagine glycosylation is found at Asn540, Asn584, and Asn585. The EGF-like 9 domain maps to 572–607; sequence YGENCDKVCRCLNNSSCDPDSGNCICSAGWTGADCA. Intrachain disulfides connect Cys576-Cys588, Cys582-Cys595, and Cys597-Cys606. Asn630 is a glycosylation site (N-linked (GlcNAc...) asparagine). The EGF-like 10 domain occupies 660 to 695; sequence YGPGCKLKCNCEHGGECNHVTGQCQCLPGWTGSNCN. Cystine bridges form between Cys664-Cys676, Cys670-Cys683, and Cys685-Cys694. N-linked (GlcNAc...) asparagine glycosylation is found at Asn695 and Asn795. The helical transmembrane segment at 801 to 821 threads the bilayer; the sequence is VALTLVLMTLFACIIFAVFIY. Over 822–1031 the chain is Cytoplasmic; it reads YRRRVSNLKT…SPSSSPKFLK (210 aa). The span at 940 to 954 shows a compositional bias: basic and acidic residues; it reads KEGYKDPDEYDHLDY. Disordered regions lie at residues 940–964 and 989–1031; these read KEGYKDPDEYDHLDYSRPSTSQKPH and TVLL…KFLK. The span at 1009 to 1031 shows a compositional bias: polar residues; sequence DNTNTNLDNVSTASPSSSPKFLK.

The protein belongs to the MEGF family. As to quaternary structure, interacts (via the cytoplasmic domain) with shark; this is required for the recruitment of drpr and glial cells to severed axons and for the phagocytosis of axonal debris by glial cells following axon injury. Interacts with ced-6. In terms of assembly, interacts with csw; this results in dephosphorylation of drpr isoform A which is required for the inhibition of glial cell engulfment of axonal debris produced following axonal injury. Post-translationally, phosphorylated on tyrosine residues. Phosphorylation is induced by binding to prtp. It is also induced by binding to the membrane phospholipid phosphatidylserine. Phosphorylation may be mediated directly or indirectly by Src42a and is required for interaction with shark. In terms of processing, dephosphorylated by csw which is required for the inhibition of glial cell engulfment of axonal debris produced following axonal injury. Expressed in adult head (at protein level). Expressed in glia, macrophages and ectoderm (at protein level). Detected in glia around the mushroom body dorsal lobe and in glial processes infiltrating the medial lobe (at protein level). Expressed in adult brain glia including antennal lobe glia (at protein level). Expressed in the larval fat body (at protein level). Expressed in the ovary (at protein level). Isoform B: Predominant isoform in adult glia.

It localises to the cell membrane. It is found in the cell projection. The protein resides in the axon. Its subcellular location is the cytoplasm. The protein localises to the postsynaptic cell membrane. It localises to the cell cortex. It is found in the phagocytic cup. The protein resides in the cytoplasmic vesicle. Its subcellular location is the phagosome. Its function is as follows. Receptor which is involved in the phagocytosis of a variety of cells including apoptotic cells, severed and pruned axons, degenerating dendrites, salivary gland cells, germline cells and bacteria. Binds to the ligand prtp which relocates from the endoplasmic reticulum to the cell surface during apoptosis. Ligand-binding may promote tyrosine phosphorylation mediated by Src42a, interaction with shark and subsequent activation of phagocytosis. Also binds to the membrane phospholipid phosphatidylserine which is exposed on the surface of apoptotic cells. Required for the phagocytosis of apoptotic cells by macrophages. Also required for the phagocytosis of apoptotic neurons by glial cells in the embryonic nervous system. Acts downstream of NimC4/simu in the glial phagocytosis of apoptotic neurons. Plays a role in the glial engulfment of larval axons as part of programmed axon pruning during metamorphosis. Also mediates glial cell clearance of severed axons following axonal injury. Required for the engulfment of degenerating dendrites by epidermal cells. Required in the ovary for the engulfment and subsequent processing of dying germline cells by follicular epithelial cells through activation of the JNK/bsk pathway. Plays a role in neuromuscular junction development by mediating the clearance of presynaptic debris and immature boutons which are shed by growing synapses. Required for larval salivary gland cell death which occurs following a rise in steroid levels after puparium formation. Also involved in bacterial phagocytosis. Required for hemocyte phagocytosis of the Gram-positive bacterium S.aureus. Lipoteichoic acid, synthesized by the S.aureus lipoteichoic acid synthase ltaS, acts as a ligand for drpr in this process. Together with Src42a and shark, promotes the migration of macrophages to sites of wounding as part of a signaling cascade where Scr42a detects production of hydrogen peroxide at wound sites which triggers phosphorylation of drpr and subsequent recruitment and activation of shark. Also required for macrophage priming which occurs following phagocytosis of apoptotic cells and ensures that macrophages develop a form of molecular memory that allows them to later mount an inflammatory response to tissue damage and bacterial infection. Is also an essential factor in the regulation of muscle development and myogenesis, and as a consequence is required for normal locomotion. Likely to control the balance between skeletal muscle satellite cells proliferation and differentiation through regulation of the notch signaling pathway. Promotes engulfment of axonal debris by glial cells following axonal injury. In terms of biological role, potently inhibits glial cell engulfment of axonal debris produced following axonal injury. This is Protein draper from Drosophila melanogaster (Fruit fly).